A 132-amino-acid polypeptide reads, in one-letter code: Small ribosomal subunit protein bS6 (132 aa).

Residues 96-132 (HAEGPSIQMQKRDERERGDRGDRSDRGDRGDRGGFRR) are disordered. A compositionally biased stretch (basic and acidic residues) spans 105–132 (QKRDERERGDRGDRSDRGDRGDRGGFRR).

Belongs to the bacterial ribosomal protein bS6 family.

Its function is as follows. Binds together with bS18 to 16S ribosomal RNA. The sequence is that of Small ribosomal subunit protein bS6 from Cereibacter sphaeroides (strain ATCC 17023 / DSM 158 / JCM 6121 / CCUG 31486 / LMG 2827 / NBRC 12203 / NCIMB 8253 / ATH 2.4.1.) (Rhodobacter sphaeroides).